The primary structure comprises 323 residues: Lipoyl synthase (323 aa).

C56, C61, C67, C82, C86, C89, and S293 together coordinate [4Fe-4S] cluster. One can recognise a Radical SAM core domain in the interval 68–282 (WEDREATFLI…AAEARELGFA (215 aa)).

It belongs to the radical SAM superfamily. Lipoyl synthase family. [4Fe-4S] cluster serves as cofactor.

It is found in the cytoplasm. It carries out the reaction [[Fe-S] cluster scaffold protein carrying a second [4Fe-4S](2+) cluster] + N(6)-octanoyl-L-lysyl-[protein] + 2 oxidized [2Fe-2S]-[ferredoxin] + 2 S-adenosyl-L-methionine + 4 H(+) = [[Fe-S] cluster scaffold protein] + N(6)-[(R)-dihydrolipoyl]-L-lysyl-[protein] + 4 Fe(3+) + 2 hydrogen sulfide + 2 5'-deoxyadenosine + 2 L-methionine + 2 reduced [2Fe-2S]-[ferredoxin]. It functions in the pathway protein modification; protein lipoylation via endogenous pathway; protein N(6)-(lipoyl)lysine from octanoyl-[acyl-carrier-protein]: step 2/2. Functionally, catalyzes the radical-mediated insertion of two sulfur atoms into the C-6 and C-8 positions of the octanoyl moiety bound to the lipoyl domains of lipoate-dependent enzymes, thereby converting the octanoylated domains into lipoylated derivatives. The chain is Lipoyl synthase from Acidothermus cellulolyticus (strain ATCC 43068 / DSM 8971 / 11B).